The primary structure comprises 215 residues: Octanoyltransferase (215 aa).

A BPL/LPL catalytic domain is found at 31-206; it reads PESQDEVWLV…QLVRHLDYAE (176 aa). Residues 70 to 77, 137 to 139, and 150 to 152 contribute to the substrate site; these read RGGQVTYH, SLG, and GLA. Cys168 serves as the catalytic Acyl-thioester intermediate.

Belongs to the LipB family.

It is found in the cytoplasm. It catalyses the reaction octanoyl-[ACP] + L-lysyl-[protein] = N(6)-octanoyl-L-lysyl-[protein] + holo-[ACP] + H(+). It functions in the pathway protein modification; protein lipoylation via endogenous pathway; protein N(6)-(lipoyl)lysine from octanoyl-[acyl-carrier-protein]: step 1/2. Its function is as follows. Catalyzes the transfer of endogenously produced octanoic acid from octanoyl-acyl-carrier-protein onto the lipoyl domains of lipoate-dependent enzymes. Lipoyl-ACP can also act as a substrate although octanoyl-ACP is likely to be the physiological substrate. The protein is Octanoyltransferase of Pseudomonas entomophila (strain L48).